The primary structure comprises 65 residues: Cold shock-like protein CspC (65 aa).

Residues 3 to 62 form the CSD domain; that stretch reads GRVKWFNAEKGFGFIEREDGDDVFVHFSAIQQDGYKSLEEGQQVEFDIVDGARGPQAANV.

Homodimer.

The protein localises to the cytoplasm. This Bacillus cereus protein is Cold shock-like protein CspC (cspC).